An 813-amino-acid polypeptide reads, in one-letter code: Fibroblast growth factor receptor 2 (813 aa).

The N-terminal stretch at 1 to 14 (MLLLALLAFLLVSR) is a signal peptide. Over 18-367 (RPSYSMVDDT…EDNPVPYYME (350 aa)) the chain is Extracellular. The Ig-like C2-type 1 domain maps to 21-117 (YSMVDDTTPE…NSHFFHVNVT (97 aa)). Residues C58 and C103 are joined by a disulfide bond. N79 and N115 each carry an N-linked (GlcNAc...) asparagine glycan. A disordered region spans residues 119–143 (ASSSGDDEDDNDGSEDFTNDNNNIR). Residues 123–136 (GDDEDDNDGSEDFT) show a composition bias toward acidic residues. Ig-like C2-type domains follow at residues 145–237 (PYWT…YHLD) and 246–348 (PILQ…AWLT). A heparin-binding region spans residues 152-169 (KMEKKLHAVSAANTVKLR). C170 and C221 are disulfide-bonded. N-linked (GlcNAc...) asparagine glycosylation is found at N231, N255, N287, N308, and N321. A disulfide bridge connects residues C268 and C332. Residues 368–388 (IGIYSTGIFIIFCMVVVCVVC) form a helical membrane-spanning segment. Topologically, residues 389–813 (RMRQGAKKKK…FQHVNGVVKT (425 aa)) are cytoplasmic. Y456 bears the Phosphotyrosine; by autocatalysis mark. In terms of domain architecture, Protein kinase spans 471–760 (LTLGKPLGEG…LTLTTNEEYL (290 aa)). ATP-binding positions include 477–485 (LGEGCFGQV), K507, 555–557 (EYA), and N561. Y576 carries the post-translational modification Phosphotyrosine; by autocatalysis. D616 acts as the Proton acceptor in catalysis. Phosphotyrosine; by autocatalysis is present on residues Y646, Y647, and Y759. Residues 771 to 792 (PSFPDSSCSASSSSGDDSVFSP) are compositionally biased toward low complexity. A disordered region spans residues 771 to 801 (PSFPDSSCSASSSSGDDSVFSPDPMPHDPCL).

The protein belongs to the protein kinase superfamily. Tyr protein kinase family. Fibroblast growth factor receptor subfamily. Monomer. Homodimer after ligand binding. Post-translationally, autophosphorylated. Binding of FGF family members together with heparan sulfate proteoglycan or heparin promotes receptor dimerization and autophosphorylation on tyrosine residues. Autophosphorylation occurs in trans between the two FGFR molecules present in the dimer. N-glycosylated in the endoplasmic reticulum. The N-glycan chains undergo further maturation to an Endo H-resistant form in the Golgi apparatus. In terms of processing, ubiquitinated. FGFR2 is rapidly ubiquitinated after autophosphorylation, leading to internalization and degradation. Subject to degradation both in lysosomes and by the proteasome. In terms of tissue distribution, expressed in the anterior neural plate in early neurula stage embryos. Later in development, the protein is also expressed in the eye anlagen, midbrain-hindbrain boundary and otic vesicle.

It localises to the cell membrane. The protein localises to the golgi apparatus. The protein resides in the cytoplasmic vesicle. It catalyses the reaction L-tyrosyl-[protein] + ATP = O-phospho-L-tyrosyl-[protein] + ADP + H(+). Its activity is regulated as follows. Present in an inactive conformation in the absence of bound ligand. Ligand binding leads to dimerization and activation by autophosphorylation on tyrosine residues. Functionally, tyrosine-protein kinase that acts as a cell-surface receptor for fibroblast growth factors and plays an essential role in the regulation of cell proliferation, differentiation, migration and apoptosis, and in the regulation of embryonic development. Required for normal embryonic patterning, limb bud development, lung morphogenesis, osteogenesis and skin development. Plays an essential role in the regulation of osteoblast differentiation, proliferation and apoptosis, and is required for normal skeleton development. Promotes cell proliferation in keratinocytes and immature osteoblasts, but promotes apoptosis in differentiated osteoblasts. Phosphorylates PLCG1, FRS2 and PAK4. Ligand binding leads to the activation of several signaling cascades. Activation of PLCG1 leads to the production of the cellular signaling molecules diacylglycerol and inositol 1,4,5-trisphosphate. Phosphorylation of FRS2 triggers recruitment of GRB2, GAB1, PIK3R1 and SOS1, and mediates activation of RAS, MAPK1/ERK2, MAPK3/ERK1 and the MAP kinase signaling pathway, as well as of the AKT1 signaling pathway. FGFR2 signaling is down-regulated by ubiquitination, internalization and degradation. Mutations that lead to constitutive kinase activation or impair normal FGFR2 maturation, internalization and degradation lead to aberrant signaling. Over-expressed FGFR2 promotes activation of STAT1. The chain is Fibroblast growth factor receptor 2 (fgfr2) from Xenopus laevis (African clawed frog).